Here is a 670-residue protein sequence, read N- to C-terminus: Protein phosphatase 1 regulatory subunit 15A (670 aa).

The Cytoplasmic portion of the chain corresponds to 1–21; the sequence is MAPGQMPHQPAPWRGTHPLFL. The tract at residues 1-60 is required for localization in the endoplasmic reticulum; the sequence is MAPGQMPHQPAPWRGTHPLFLLSPLMGLLSRAWSLLRAPGPPEPWLVEAVTEADQGGAGL. The helical intramembrane region spans 22–39; the sequence is LSPLMGLLSRAWSLLRAP. The Cytoplasmic portion of the chain corresponds to 40–670; that stretch reads GPPEPWLVEA…PSLDLSGRRG (631 aa). Disordered regions lie at residues 76–144, 159–178, and 191–501; these read GRHP…GQPA, PGEEESKEEAVTGGGGNEVT, and PGEE…EKWG. Residues 78–87 are compositionally biased toward basic and acidic residues; that stretch reads HPQEETKDSG. Residues 191–202 show a composition bias toward acidic residues; sequence PGEEEEEEEENG. The segment covering 254-265 has biased composition (basic and acidic residues); it reads KDKQAEKGDADP. Over residues 271–288 the composition is skewed to polar residues; that stretch reads SLAQRPSLRTWQHPSSAI. Residues 289 to 299 are compositionally biased toward acidic residues; that stretch reads TEEEEDRDSEE. Over residues 302–312 the composition is skewed to polar residues; that stretch reads ASSSVPLTSAF. Composition is skewed to acidic residues over residues 321-344 and 367-385; these read EDTEEEDEEEEDCDSEATEDEGEA and DTEEEEDCDSEATEDEGEA. Tandem repeats lie at residues 355-381, 396-426, 436-462, and 478-511. Residues 355–511 are 4 X 34 AA approximate repeats; that stretch reads AFLSAWVYRP…EAESCPFRVA (157 aa). Residues 355-511 form an interaction with SMAD7 region; that stretch reads AFLSAWVYRP…EAESCPFRVA (157 aa). The segment covering 388 to 397 has biased composition (polar residues); it reads SSATPPTSAF. A Phosphotyrosine modification is found at Tyr-403. Residues 407–425 are compositionally biased toward acidic residues; the sequence is DTEEEEDCDSEATEDEGEA. Tyr-443 carries the post-translational modification Phosphotyrosine. Positions 448–461 are enriched in acidic residues; it reads DTEEEDEYEDEDNE. Positions 484–556 are interaction with KMT2A/MLL1; that stretch reads IYQPGEKTDG…DLERLLKTRK (73 aa). A compositionally biased stretch (basic and acidic residues) spans 489 to 501; the sequence is EKTDGGEAAEKWG. Phosphotyrosine is present on Tyr-513. Positions 537–584 are interaction with SMARCB1; the sequence is KSAQTPTRHQDLERLLKTRKVRFSEKVSIHPLVVWAGPAQAARRGPWE. Residues 622-670 form a disordered region; sequence NPPTSLATVPAPTQTSPMTPIQATPLSHALASPSPPCVSPSLDLSGRRG. Positions 623-645 are enriched in polar residues; sequence PPTSLATVPAPTQTSPMTPIQAT.

Belongs to the PPP1R15 family. As to quaternary structure, interacts with PPP1CA. Interacts with EIF2S1. Interacts with PCNA. Interacts with LYN and KMT2A/MLL1. Interacts with PPP1R1A and SMARCB1. Interacts with SMAD7. Interacts with BAG1. Interacts with NOX4. In terms of processing, phosphorylated on tyrosine by LYN; which impairs its antiproliferative activity. Polyubiquitinated. Exhibits a rapid proteasomal degradation with a half-life under 1 hour, ubiquitination depends on endoplasmic reticulum association.

Its subcellular location is the endoplasmic reticulum membrane. The protein resides in the mitochondrion outer membrane. In terms of biological role, recruits the serine/threonine-protein phosphatase PPP1CA to prevents excessive phosphorylation of the translation initiation factor eIF-2A/EIF2S1, thereby reversing the shut-off of protein synthesis initiated by stress-inducible kinases and facilitating recovery of cells from stress. Down-regulates the TGF-beta signaling pathway by promoting dephosphorylation of TGFB1 by PP1. May promote apoptosis by inducing TP53 phosphorylation on 'Ser-15'. Plays an essential role in autophagy by tuning translation during starvation, thus enabling lysosomal biogenesis and a sustained autophagic flux. In Bos taurus (Bovine), this protein is Protein phosphatase 1 regulatory subunit 15A (PPP1R15A).